Consider the following 102-residue polypeptide: Transposable element activator uncharacterized 12 kDa protein (102 aa).

Residues 24–51 are compositionally biased toward basic residues; the sequence is HNHNQNHNHSHNLNPKKKHHRRGQRSAH. Residues 24–55 are disordered; the sequence is HNHNQNHNHSHNLNPKKKHHRRGQRSAHRMYG.

The sequence is that of Transposable element activator uncharacterized 12 kDa protein from Zea mays (Maize).